A 391-amino-acid chain; its full sequence is Chaperone protein HtpG (391 aa).

This sequence belongs to the heat shock protein 90 family. Homodimer.

It localises to the cytoplasm. Molecular chaperone. Has ATPase activity. This is Chaperone protein HtpG (htpG) from Aliivibrio fischeri (Vibrio fischeri).